The primary structure comprises 363 residues: Chorismate synthase (363 aa).

Positions 48 and 54 each coordinate NADP(+). Residues 125 to 127 (RSS), 237 to 238 (NA), glycine 277, 292 to 296 (KPTSS), and arginine 318 contribute to the FMN site.

Belongs to the chorismate synthase family. Homotetramer. It depends on FMNH2 as a cofactor.

The catalysed reaction is 5-O-(1-carboxyvinyl)-3-phosphoshikimate = chorismate + phosphate. Its pathway is metabolic intermediate biosynthesis; chorismate biosynthesis; chorismate from D-erythrose 4-phosphate and phosphoenolpyruvate: step 7/7. In terms of biological role, catalyzes the anti-1,4-elimination of the C-3 phosphate and the C-6 proR hydrogen from 5-enolpyruvylshikimate-3-phosphate (EPSP) to yield chorismate, which is the branch point compound that serves as the starting substrate for the three terminal pathways of aromatic amino acid biosynthesis. This reaction introduces a second double bond into the aromatic ring system. This Pseudomonas entomophila (strain L48) protein is Chorismate synthase.